Reading from the N-terminus, the 308-residue chain is Dipeptide transport system permease protein DppB (308 aa).

The next 7 membrane-spanning stretches (helical) occupy residues 10-30, 59-79, 100-120, 131-151, 168-188, 228-248, and 278-298; these read WAMAATILVITTLTFVLMKVI, LIFQYIFYLKSIITFDFGPSI, LGMTAIVIAVISGLVLGVIAA, AMSLAVLGISIPNFILATLLI, SPIHMVLPTAALAVGPMAIIA, MPVITVLGTLVASILTGSFVI, and VFYSVILIIMLFLVDLAYGLL. Residues 94-295 form the ABC transmembrane type-1 domain; that stretch reads FPVSFELGMT…IMLFLVDLAY (202 aa).

The protein belongs to the binding-protein-dependent transport system permease family. OppBC subfamily.

It is found in the cell membrane. Its function is as follows. Probably part of the ABC transporter DppBCDE involved in dipeptide transport. Responsible for the translocation of the substrate across the membrane. This Bacillus subtilis (strain 168) protein is Dipeptide transport system permease protein DppB (dppB).